The following is a 355-amino-acid chain: Elongation factor Ts (355 aa).

The tract at residues 82–85 is involved in Mg(2+) ion dislocation from EF-Tu; it reads TDFV.

Belongs to the EF-Ts family.

It is found in the cytoplasm. Its function is as follows. Associates with the EF-Tu.GDP complex and induces the exchange of GDP to GTP. It remains bound to the aminoacyl-tRNA.EF-Tu.GTP complex up to the GTP hydrolysis stage on the ribosome. The chain is Elongation factor Ts from Helicobacter pylori (strain G27).